Here is a 215-residue protein sequence, read N- to C-terminus: Cytochrome b6 (215 aa).

A helical membrane pass occupies residues 32 to 52 (IFYCLGGITLTCFLVQVASGF). Residue C35 participates in heme c binding. Heme b-binding residues include H86 and H100. A run of 3 helical transmembrane segments spans residues 90–110 (ASMM…TGGF), 116–136 (LTWV…VTGY), and 186–206 (LHTF…FLMI). Positions 187 and 202 each coordinate heme b.

The protein belongs to the cytochrome b family. PetB subfamily. In terms of assembly, the 4 large subunits of the cytochrome b6-f complex are cytochrome b6, subunit IV (17 kDa polypeptide, PetD), cytochrome f and the Rieske protein, while the 4 small subunits are PetG, PetL, PetM and PetN. The complex functions as a dimer. Heme b serves as cofactor. The cofactor is heme c.

Its subcellular location is the plastid. It is found in the chloroplast thylakoid membrane. In terms of biological role, component of the cytochrome b6-f complex, which mediates electron transfer between photosystem II (PSII) and photosystem I (PSI), cyclic electron flow around PSI, and state transitions. The chain is Cytochrome b6 from Anthoceros angustus (Hornwort).